The primary structure comprises 88 residues: Small ribosomal subunit protein bS20 (88 aa).

It belongs to the bacterial ribosomal protein bS20 family.

Functionally, binds directly to 16S ribosomal RNA. This chain is Small ribosomal subunit protein bS20, found in Rhodopseudomonas palustris (strain BisA53).